The following is a 771-amino-acid chain: Assimilatory nitrate reductase electron transfer subunit (771 aa).

An FAD-binding site is contributed by 43 to 79 (YNRILLSSVLQGEASLDDITLNSKDWYDKHGITLYTG). C414, C416, C449, and C452 together coordinate [2Fe-2S] cluster.

Requires FAD as cofactor. [2Fe-2S] cluster serves as cofactor.

Its function is as follows. Required for nitrate assimilation. The protein is Assimilatory nitrate reductase electron transfer subunit (nasB) of Bacillus subtilis (strain 168).